A 121-amino-acid chain; its full sequence is NADH-quinone oxidoreductase subunit A 1 (121 aa).

3 consecutive transmembrane segments (helical) span residues isoleucine 11–alanine 31, leucine 65–valine 85, and methionine 90–isoleucine 110.

Belongs to the complex I subunit 3 family. In terms of assembly, NDH-1 is composed of 14 different subunits. Subunits NuoA, H, J, K, L, M, N constitute the membrane sector of the complex.

Its subcellular location is the cell inner membrane. The catalysed reaction is a quinone + NADH + 5 H(+)(in) = a quinol + NAD(+) + 4 H(+)(out). Functionally, NDH-1 shuttles electrons from NADH, via FMN and iron-sulfur (Fe-S) centers, to quinones in the respiratory chain. The immediate electron acceptor for the enzyme in this species is believed to be ubiquinone. Couples the redox reaction to proton translocation (for every two electrons transferred, four hydrogen ions are translocated across the cytoplasmic membrane), and thus conserves the redox energy in a proton gradient. This Rhizobium meliloti (strain 1021) (Ensifer meliloti) protein is NADH-quinone oxidoreductase subunit A 1.